A 266-amino-acid chain; its full sequence is Streptomycin 3''-kinase (266 aa).

The active-site Proton acceptor is the aspartate 154.

It belongs to the aminoglycoside phosphotransferase family.

The enzyme catalyses streptomycin + ATP = streptomycin 3''-phosphate + ADP + H(+). Its function is as follows. The aminoglycoside phosphotransferases achieve inactivation of their antibiotic substrates by phosphorylation. The sequence is that of Streptomycin 3''-kinase (str) from Klebsiella pneumoniae.